We begin with the raw amino-acid sequence, 469 residues long: 3-phosphoshikimate 1-carboxyvinyltransferase (469 aa).

Residues 21–45 (KDTILTHSDQPRPLQSRANGPLTGK) are disordered. 3 residues coordinate 3-phosphoshikimate: Lys-52, Ser-53, and Arg-57. Phosphoenolpyruvate is bound at residue Lys-52. Gly-125 and Arg-153 together coordinate phosphoenolpyruvate. The 3-phosphoshikimate site is built by Ser-199, Gln-201, Asp-352, and Lys-379. Gln-201 provides a ligand contact to phosphoenolpyruvate. Residue Asp-352 is the Proton acceptor of the active site. Positions 383 and 426 each coordinate phosphoenolpyruvate.

It belongs to the EPSP synthase family. Monomer.

It is found in the cytoplasm. It carries out the reaction 3-phosphoshikimate + phosphoenolpyruvate = 5-O-(1-carboxyvinyl)-3-phosphoshikimate + phosphate. It participates in metabolic intermediate biosynthesis; chorismate biosynthesis; chorismate from D-erythrose 4-phosphate and phosphoenolpyruvate: step 6/7. Its function is as follows. Catalyzes the transfer of the enolpyruvyl moiety of phosphoenolpyruvate (PEP) to the 5-hydroxyl of shikimate-3-phosphate (S3P) to produce enolpyruvyl shikimate-3-phosphate and inorganic phosphate. This is 3-phosphoshikimate 1-carboxyvinyltransferase from Bradyrhizobium diazoefficiens (strain JCM 10833 / BCRC 13528 / IAM 13628 / NBRC 14792 / USDA 110).